The following is a 642-amino-acid chain: Threonine--tRNA ligase (642 aa).

Positions 1–61 (MPIITLPDGS…EADASLAIIT (61 aa)) constitute a TGS domain. The interval 243-534 (DHRKIGKQLD…LTEEYAGLFP (292 aa)) is catalytic. Zn(2+) is bound by residues cysteine 334, histidine 385, and histidine 511.

This sequence belongs to the class-II aminoacyl-tRNA synthetase family. In terms of assembly, homodimer. Zn(2+) serves as cofactor.

The protein resides in the cytoplasm. The catalysed reaction is tRNA(Thr) + L-threonine + ATP = L-threonyl-tRNA(Thr) + AMP + diphosphate + H(+). In terms of biological role, catalyzes the attachment of threonine to tRNA(Thr) in a two-step reaction: L-threonine is first activated by ATP to form Thr-AMP and then transferred to the acceptor end of tRNA(Thr). Also edits incorrectly charged L-seryl-tRNA(Thr). The polypeptide is Threonine--tRNA ligase (Aeromonas hydrophila subsp. hydrophila (strain ATCC 7966 / DSM 30187 / BCRC 13018 / CCUG 14551 / JCM 1027 / KCTC 2358 / NCIMB 9240 / NCTC 8049)).